The chain runs to 478 residues: Proline--tRNA ligase (478 aa).

This sequence belongs to the class-II aminoacyl-tRNA synthetase family. ProS type 3 subfamily. In terms of assembly, homodimer.

Its subcellular location is the cytoplasm. The enzyme catalyses tRNA(Pro) + L-proline + ATP = L-prolyl-tRNA(Pro) + AMP + diphosphate. Its function is as follows. Catalyzes the attachment of proline to tRNA(Pro) in a two-step reaction: proline is first activated by ATP to form Pro-AMP and then transferred to the acceptor end of tRNA(Pro). The chain is Proline--tRNA ligase from Methanococcoides burtonii (strain DSM 6242 / NBRC 107633 / OCM 468 / ACE-M).